Consider the following 419-residue polypeptide: Carbohydrate sulfotransferase 12 (419 aa).

Residues 1 to 5 lie on the Cytoplasmic side of the membrane; it reads MTKPR. The chain crosses the membrane as a helical; Signal-anchor for type II membrane protein span at residues 6–26; it reads LFRLWLVLGSALMILLIIVYW. The Lumenal segment spans residues 27 to 419; the sequence is DNVGTAHFYL…YPKPENLLRD (393 aa). Over residues 78 to 87 the composition is skewed to basic and acidic residues; that stretch reads HNDLSRRKTE. Residues 78-99 are disordered; the sequence is HNDLSRRKTEQPPVPAPSKPVL. N139 is a glycosylation site (N-linked (GlcNAc...) asparagine). 176 to 182 lines the 3'-phosphoadenylyl sulfate pocket; it reads PKVACTN. The N-linked (GlcNAc...) asparagine glycan is linked to N214. Residue 250–258 participates in 3'-phosphoadenylyl sulfate binding; sequence RDPFVRLIS. 2 N-linked (GlcNAc...) asparagine glycosylation sites follow: N285 and N375.

The protein belongs to the sulfotransferase 2 family.

The protein resides in the golgi apparatus membrane. It carries out the reaction chondroitin beta-D-glucuronate + n 3'-phosphoadenylyl sulfate = chondroitin 4'-sulfate + n adenosine 3',5'-bisphosphate + n H(+). Functionally, catalyzes the transfer of sulfate to position 4 of the N-acetylgalactosamine (GalNAc) residue of chondroitin and desulfated dermatan sulfate. Chondroitin sulfate constitutes the predominant proteoglycan present in cartilage and is distributed on the surfaces of many cells and extracellular matrices. Activity toward partially desulfated dermatan sulfate is however lower. Does not form 4, 6-di-O-sulfated GalNAc when chondroitin sulfate C is used as an acceptor. This Mus musculus (Mouse) protein is Carbohydrate sulfotransferase 12 (Chst12).